Here is a 193-residue protein sequence, read N- to C-terminus: Proton-translocating ferredoxin:NAD(+) oxidoreductase complex subunit A (193 aa).

6 helical membrane-spanning segments follow: residues 11–31, 39–59, 62–82, 102–122, 134–154, and 171–191; these read AVVV…FFGV, VGMG…AWVV, FVLI…LLIA, MWGI…VPIL, VVNA…MASL, and GVAF…SGMI.

Belongs to the NqrDE/RnfAE family. The complex is composed of six subunits: RnfA, RnfB, RnfC, RnfD, RnfE and RnfG.

Its subcellular location is the cell membrane. Its function is as follows. Part of a membrane-bound complex that couples electron transfer with translocation of ions across the membrane. Couples electron transfer from reduced ferredoxin to NAD(+) with translocation of H(+) out of the cell. Essential for energy conservation during autotrophic growth. Contributes to ATP synthesis during heterotrophic growth. The sequence is that of Proton-translocating ferredoxin:NAD(+) oxidoreductase complex subunit A from Clostridium ljungdahlii (strain ATCC 55383 / DSM 13528 / PETC).